A 64-amino-acid polypeptide reads, in one-letter code: Conotoxin VnMLCL-05 (64 aa).

The signal sequence occupies residues 1–19; that stretch reads MLCLPVFIILLLLASPAAP. A propeptide spanning residues 20–43 is cleaved from the precursor; the sequence is NPLQTRIQSNLIRAGPEDANIKTD. A Lysine amide modification is found at K63.

The protein belongs to the conotoxin T superfamily. In terms of tissue distribution, expressed by the venom duct.

It is found in the secreted. This Conus ventricosus (Mediterranean cone) protein is Conotoxin VnMLCL-05.